A 145-amino-acid polypeptide reads, in one-letter code: Bacilliredoxin SERP1006 (145 aa).

This sequence belongs to the bacilliredoxin family.

In Staphylococcus epidermidis (strain ATCC 35984 / DSM 28319 / BCRC 17069 / CCUG 31568 / BM 3577 / RP62A), this protein is Bacilliredoxin SERP1006.